The primary structure comprises 397 residues: Elongation factor Tu (397 aa).

The region spanning 10–207 is the tr-type G domain; it reads KPHVNIGTIG…AVDESIPDPV (198 aa). Positions 19–26 are G1; that stretch reads GHVDHGKT. 19–26 contributes to the GTP binding site; that stretch reads GHVDHGKT. Residue T26 coordinates Mg(2+). Residues 63 to 67 are G2; sequence GITIN. The interval 84-87 is G3; it reads DAPG. Residues 84-88 and 139-142 contribute to the GTP site; these read DAPGH and NKAD. The G4 stretch occupies residues 139 to 142; that stretch reads NKAD. Positions 177–179 are G5; that stretch reads SGL.

This sequence belongs to the TRAFAC class translation factor GTPase superfamily. Classic translation factor GTPase family. EF-Tu/EF-1A subfamily. Monomer.

The protein resides in the cytoplasm. It catalyses the reaction GTP + H2O = GDP + phosphate + H(+). In terms of biological role, GTP hydrolase that promotes the GTP-dependent binding of aminoacyl-tRNA to the A-site of ribosomes during protein biosynthesis. In Tropheryma whipplei (strain TW08/27) (Whipple's bacillus), this protein is Elongation factor Tu.